Here is a 355-residue protein sequence, read N- to C-terminus: UDP-N-acetylglucosamine--N-acetylmuramyl-(pentapeptide) pyrophosphoryl-undecaprenol N-acetylglucosamine transferase (355 aa).

Residues 14 to 16 (SGG), N126, R162, S190, I243, 262 to 267 (ALTVSE), and Q288 contribute to the UDP-N-acetyl-alpha-D-glucosamine site.

Belongs to the glycosyltransferase 28 family. MurG subfamily.

It localises to the cell inner membrane. The catalysed reaction is di-trans,octa-cis-undecaprenyl diphospho-N-acetyl-alpha-D-muramoyl-L-alanyl-D-glutamyl-meso-2,6-diaminopimeloyl-D-alanyl-D-alanine + UDP-N-acetyl-alpha-D-glucosamine = di-trans,octa-cis-undecaprenyl diphospho-[N-acetyl-alpha-D-glucosaminyl-(1-&gt;4)]-N-acetyl-alpha-D-muramoyl-L-alanyl-D-glutamyl-meso-2,6-diaminopimeloyl-D-alanyl-D-alanine + UDP + H(+). It functions in the pathway cell wall biogenesis; peptidoglycan biosynthesis. Cell wall formation. Catalyzes the transfer of a GlcNAc subunit on undecaprenyl-pyrophosphoryl-MurNAc-pentapeptide (lipid intermediate I) to form undecaprenyl-pyrophosphoryl-MurNAc-(pentapeptide)GlcNAc (lipid intermediate II). This is UDP-N-acetylglucosamine--N-acetylmuramyl-(pentapeptide) pyrophosphoryl-undecaprenol N-acetylglucosamine transferase from Blochmanniella pennsylvanica (strain BPEN).